Reading from the N-terminus, the 252-residue chain is MIGIIGGTGIAEILKGDKEEIINTKYGKARVIIDKENEVVLLFRHGVRHNIPPHKINYRANIYALKKLGVERILAINSVGSLKEDLKPGMFFVPNDFIEFTKKREETFYDEGKVVHIDMTDPYCPELRNILKSILDKNNFSYGEGVYVCTEGPRFETKKEIAIYKNWGDVVGMTGYPEVVLARELEMCYVSLCNITNYACGISKNILTVDEVLEKIKEMENKILKVVEDFINYGFGERKCICKDALKHAVIG.

Residues Thr8 and 44–45 (RH) each bind phosphate. Met173 lines the substrate pocket. A phosphate-binding site is contributed by Thr174. Position 197-199 (197-199 (NYA)) interacts with substrate.

The protein belongs to the PNP/MTAP phosphorylase family. MTAP subfamily. In terms of assembly, homotrimer.

The enzyme catalyses S-methyl-5'-thioinosine + phosphate = 5-(methylsulfanyl)-alpha-D-ribose 1-phosphate + hypoxanthine. Its pathway is purine metabolism; purine nucleoside salvage. Functionally, catalyzes the reversible phosphorylation of S-methyl-5'-thioinosine (MTI) to hypoxanthine and 5-methylthioribose-1-phosphate. Involved in the breakdown of S-methyl-5'-thioadenosine (MTA), a major by-product of polyamine biosynthesis. Catabolism of (MTA) occurs via deamination to MTI and phosphorolysis to hypoxanthine. The chain is Probable S-methyl-5'-thioinosine phosphorylase from Methanocaldococcus jannaschii (strain ATCC 43067 / DSM 2661 / JAL-1 / JCM 10045 / NBRC 100440) (Methanococcus jannaschii).